A 150-amino-acid chain; its full sequence is Large ribosomal subunit protein uL15 (150 aa).

The disordered stretch occupies residues 1–52; the sequence is MITLNTLKDSTRKRKPRKRVGRGIGSKHGKTCGRGEKGAGARSGYKRRLGKE. Residues 11-31 show a composition bias toward basic residues; it reads TRKRKPRKRVGRGIGSKHGKT.

This sequence belongs to the universal ribosomal protein uL15 family. Part of the 50S ribosomal subunit.

Binds to the 23S rRNA. This is Large ribosomal subunit protein uL15 from Protochlamydia amoebophila (strain UWE25).